Consider the following 282-residue polypeptide: Aspergillopepsin-2 (282 aa).

The signal sequence occupies residues 1 to 18; that stretch reads MKFSTILTGSLFATAALA. 2 propeptides span residues 19–59 and 99–109; these read APLT…GTTN and GGGYGYWKNKR. Basic residues predominate over residues 27 to 39; that stretch reads ARKEARAAGKRHS. The interval 27-46 is disordered; the sequence is ARKEARAAGKRHSNPPYIPG. Glutamine 110 carries the pyrrolidone carboxylic acid modification. Disulfide bonds link cysteine 115–cysteine 139 and cysteine 127–cysteine 210.

This sequence belongs to the peptidase G1 family. In terms of assembly, heterodimer of two noncovalently bound light and heavy chains.

The enzyme catalyses Preferential cleavage in B chain of insulin: 3-Asn-|-Gln-4, 13-Gly-|-Ala-14, and 26-Tyr-|-Thr-27.. The chain is Aspergillopepsin-2 from Aspergillus niger.